Reading from the N-terminus, the 430-residue chain is Enolase (430 aa).

Gln-163 is a binding site for (2R)-2-phosphoglycerate. The Proton donor role is filled by Glu-205. Residues Asp-242, Glu-285, and Asp-312 each coordinate Mg(2+). Residues Lys-337, Arg-366, Ser-367, and Lys-388 each contribute to the (2R)-2-phosphoglycerate site. The Proton acceptor role is filled by Lys-337.

Belongs to the enolase family. Mg(2+) is required as a cofactor.

Its subcellular location is the cytoplasm. The protein localises to the secreted. It localises to the cell surface. It carries out the reaction (2R)-2-phosphoglycerate = phosphoenolpyruvate + H2O. Its pathway is carbohydrate degradation; glycolysis; pyruvate from D-glyceraldehyde 3-phosphate: step 4/5. Catalyzes the reversible conversion of 2-phosphoglycerate (2-PG) into phosphoenolpyruvate (PEP). It is essential for the degradation of carbohydrates via glycolysis. This is Enolase from Bifidobacterium animalis subsp. lactis (strain AD011).